A 629-amino-acid polypeptide reads, in one-letter code: Forkhead box protein O1-B (629 aa).

4 disordered regions span residues 1 to 54 (MAEP…PEQG), 88 to 134 (CAHP…SRRN), 211 to 308 (SWWM…SPFL), and 359 to 397 (KNNT…QPQV). Over residues 36 to 46 (QPGNSNTSSPA) the composition is skewed to polar residues. Low complexity-rich tracts occupy residues 90–107 (HPQQ…THPQ) and 115–133 (PASG…SSRR). Positions 136-230 (WGNMSYADLI…KSGKSPRRRA (95 aa)) form a DNA-binding region, fork-head. Residues 240 to 251 (TKSRGRAAKKKM) are compositionally biased toward basic residues. 3 stretches are compositionally biased toward polar residues: residues 291-302 (TRASSDASTLSG), 359-377 (KNNT…SPLM), and 385-397 (SYTS…QPQV).

Its subcellular location is the cytoplasm. It is found in the nucleus. Functionally, transcription factor that regulates metabolic homeostasis in response to oxidative stress. Binds to the consensus sequence 5'-TT[G/A]TTTTG-3' and the related Daf-16 family binding element (DBE) with consensus sequence 5'-TT[G/A]TTTAC-3'. Main regulator of redox balance and osteoblast numbers and controls bone mass. Orchestrates the endocrine function of the skeleton in regulating glucose metabolism. May act as a positive regulator of apoptosis in cardiac smooth muscle cells as a result of its transcriptional activation of pro-apoptotic genes. The chain is Forkhead box protein O1-B (foxo1b) from Danio rerio (Zebrafish).